The primary structure comprises 241 residues: CD99 antigen-like protein 2 (241 aa).

Residues 1–23 (MAKWGSPFVFALACLALSWRVYG) form the signal peptide. The Extracellular segment spans residues 24-173 (DDFDLYDALG…TGFGSQAETG (150 aa)). The disordered stretch occupies residues 30–168 (DALGDPTEKP…NDGSDTGFGS (139 aa)). Residues 143 to 154 (GGGGGGGGGRAT) show a composition bias toward gly residues. A helical transmembrane segment spans residues 174 to 196 (TIAGIASALAMALIGAVSSYISY). Over 197–241 (QQKKFCFSIQEGLNAEYVKGEHMEAVVSEEPQVKYSVVESQSAIP) the chain is Cytoplasmic.

Belongs to the CD99 family.

The protein localises to the cell membrane. Its subcellular location is the cell junction. Functionally, may function as a homophilic adhesion molecule. The polypeptide is CD99 antigen-like protein 2 (cd99l2) (Xenopus tropicalis (Western clawed frog)).